Here is a 651-residue protein sequence, read N- to C-terminus: Peptide-N(4)-(N-acetyl-beta-glucosaminyl)asparagine amidase (651 aa).

The region spanning Glu29 to Lys90 is the PUB domain. Positions 246, 249, 279, and 282 each coordinate Zn(2+). Catalysis depends on Cys305, which acts as the Nucleophile. Catalysis depends on residues His332 and Asp349. The PAW domain occupies Glu450–Leu651.

This sequence belongs to the transglutaminase-like superfamily. PNGase family. It depends on Zn(2+) as a cofactor.

It localises to the cytoplasm. The catalysed reaction is Hydrolysis of an N(4)-(acetyl-beta-D-glucosaminyl)asparagine residue in which the glucosamine residue may be further glycosylated, to yield a (substituted) N-acetyl-beta-D-glucosaminylamine and a peptide containing an aspartate residue.. Functionally, specifically deglycosylates the denatured form of N-linked glycoproteins in the cytoplasm and assists their proteasome-mediated degradation. Cleaves the beta-aspartyl-glucosamine (GlcNAc) of the glycan and the amide side chain of Asn, converting Asn to Asp. Prefers proteins containing high-mannose over those bearing complex type oligosaccharides. Can recognize misfolded proteins in the endoplasmic reticulum that are exported to the cytosol to be destroyed and deglycosylate them, while it has no activity toward native proteins. Deglycosylation is a prerequisite for subsequent proteasome-mediated degradation of some, but not all, misfolded glycoproteins. The polypeptide is Peptide-N(4)-(N-acetyl-beta-glucosaminyl)asparagine amidase (NGLY1) (Gallus gallus (Chicken)).